A 246-amino-acid polypeptide reads, in one-letter code: Major prion protein (246 aa).

The signal sequence occupies residues 1 to 15 (MLVVFVATWSDLGLC). Residues 16–223 (KKRPKPGGWN…ESQAYYQRGS (208 aa)) form an interaction with GRB2, ERI3 and SYN1 region. Residues 18–100 (RPKPGGWNTG…QWHKPSKPKT (83 aa)) form a disordered region. 5 repeat units span residues 44–52 (PQGGGGWGQ), 53–60 (PHGGGWGQ), 61–68 (PHGGGWGQ), 69–76 (PHGGGWGQ), and 77–84 (PHGGGWGQ). The segment at 44–84 (PQGGGGWGQPHGGGWGQPHGGGWGQPHGGGWGQPHGGGWGQ) is 5 X 8 AA tandem repeats of P-H-G-G-G-W-G-Q. Positions 45–88 (QGGGGWGQPHGGGWGQPHGGGWGQPHGGGWGQPHGGGWGQGGGT) are enriched in gly residues. Cu(2+) is bound by residues His54, Gly55, Gly56, His62, Gly63, Gly64, His70, Gly71, Gly72, His78, Gly79, and Gly80. Positions 91-100 (QWHKPSKPKT) are enriched in basic residues. A disulfide bridge connects residues Cys172 and Cys207. 2 N-linked (GlcNAc...) asparagine glycosylation sites follow: Asn174 and Asn190. Ser223 carries GPI-anchor amidated serine lipidation. The propeptide at 224 to 246 (SMVLFSSPPVILLISFLIFLIVG) is removed in mature form.

The protein belongs to the prion family. In terms of assembly, monomer and homodimer. Has a tendency to aggregate into amyloid fibrils containing a cross-beta spine, formed by a steric zipper of superposed beta-strands. Soluble oligomers may represent an intermediate stage on the path to fibril formation. Copper binding may promote oligomerization. Interacts with GRB2, APP, ERI3/PRNPIP and SYN1. Mislocalized cytosolically exposed PrP interacts with MGRN1; this interaction alters MGRN1 subcellular location and causes lysosomal enlargement. Interacts with KIAA1191.

The protein localises to the cell membrane. Its subcellular location is the golgi apparatus. Its function is as follows. Its primary physiological function is unclear. Has cytoprotective activity against internal or environmental stresses. May play a role in neuronal development and synaptic plasticity. May be required for neuronal myelin sheath maintenance. May play a role in iron uptake and iron homeostasis. Soluble oligomers are toxic to cultured neuroblastoma cells and induce apoptosis (in vitro). Association with GPC1 (via its heparan sulfate chains) targets PRNP to lipid rafts. Also provides Cu(2+) or Zn(2+) for the ascorbate-mediated GPC1 deaminase degradation of its heparan sulfate side chains. The protein is Major prion protein (PRNP) of Erythrocebus patas (Red guenon).